Reading from the N-terminus, the 90-residue chain is Small ribosomal subunit protein bS18 (90 aa).

Belongs to the bacterial ribosomal protein bS18 family. In terms of assembly, part of the 30S ribosomal subunit. Forms a tight heterodimer with protein bS6.

Functionally, binds as a heterodimer with protein bS6 to the central domain of the 16S rRNA, where it helps stabilize the platform of the 30S subunit. The protein is Small ribosomal subunit protein bS18 of Bordetella bronchiseptica (strain ATCC BAA-588 / NCTC 13252 / RB50) (Alcaligenes bronchisepticus).